A 201-amino-acid chain; its full sequence is Syndecan-2 (201 aa).

The N-terminal stretch at 1 to 18 (MQRAWILLTLGLMACVSA) is a signal peptide. Over 19–144 (ETRAELTSDK…HSDNLFKRTE (126 aa)) the chain is Extracellular. O-linked (Xyl...) (glycosaminoglycan) serine glycosylation is found at Ser-41, Ser-55, and Ser-57. Disordered regions lie at residues 42–69 (GLYPIDDDDYSSASGSGAYEDKGSPDLT) and 88–129 (TMTL…KSTD). Residues 90–102 (TLKTQSITPTQTE) show a composition bias toward polar residues. The segment covering 106–123 (ETDKKEFEISEAEEKQDP) has biased composition (basic and acidic residues). Phosphoserine is present on Ser-115. Residues 145–169 (VLAAVIAGGVIGFLFAIFLILLLVY) traverse the membrane as a helical segment. Over 170–201 (RMRKKDEGSYDLGERKPSSAAYQKAPTKEFYA) the chain is Cytoplasmic. Residues 178–201 (SYDLGERKPSSAAYQKAPTKEFYA) are disordered. Ser-187 is modified (phosphoserine).

The protein belongs to the syndecan proteoglycan family. Interacts (via cytoplasmic domain) with SARM1. Forms a complex with SDCBP and PDCD6IP. Post-translationally, O-glycosylated; contains both heparan sulfate and chondroitin sulfate.

Its subcellular location is the membrane. Functionally, cell surface proteoglycan which regulates dendritic arbor morphogenesis. This Rattus norvegicus (Rat) protein is Syndecan-2 (Sdc2).